Reading from the N-terminus, the 440-residue chain is Thymidine phosphorylase (440 aa).

Belongs to the thymidine/pyrimidine-nucleoside phosphorylase family. In terms of assembly, homodimer.

The catalysed reaction is thymidine + phosphate = 2-deoxy-alpha-D-ribose 1-phosphate + thymine. Its pathway is pyrimidine metabolism; dTMP biosynthesis via salvage pathway; dTMP from thymine: step 1/2. Functionally, the enzymes which catalyze the reversible phosphorolysis of pyrimidine nucleosides are involved in the degradation of these compounds and in their utilization as carbon and energy sources, or in the rescue of pyrimidine bases for nucleotide synthesis. This chain is Thymidine phosphorylase, found in Burkholderia pseudomallei (strain 1106a).